Reading from the N-terminus, the 978-residue chain is MVSINQNFKLPISMNSQPIQIQQQQFKQPQQQPQQKSNSCFSDQENYPANIQPSSSTSSSSSSSIHITKSMVIRPPLESNQPQPQQQQQQQQTLQQIHHQQVQLQQQQSLQMQQQQLQQQQQQQQQQQMPPPQSLPNKSNEPQEPIVVYETIRSGDSKRLKEYRQGEFLGKGGFAKCYLMTEVETNRIYAAKIIPKSTLQKTRARSKLKSEIKIHSSLSHENIVKFEHCFENEENVYILLELCNQKTVMDIHKKRKYLMEYETKYYVYQVIMAVQYLHNNNIIHRDLKLGNLFIDNMRIKLGDFGLSTKVEHGERKKTICGTPNYIAPEILDNSNGHSYEVDVWSIGIILYTLLIGKPPFETSDVKHTYQRIKQNQYSFPDEPIISHYGKSLIISILNPVPEQRPNLTQILEHDFFTYSPIPKYLPVSSLTTAPSQSTINQNMGRPLSEKTNIVNQQHLQLAGTTSPTKNNNHHYQQYQQQPQQQYNNNYQQSFSPKKQINNMNNNNNNNNNNNNNNNNNNNNNNNNLKQYNYSNNNINYNNNNNNINNQFANLSPNSQQKLSEVENDDFHYRKLRRLEKMKENDLKTQLLIKQQYTNMNENQQQQQQQQQQQQQQQQQQQRVNNNINNNGNTVTVTTGNNTVNVQIKELETKIANNHISDSPPVSSNNNYPQQIQKQQPNFNNEFYLGMPNNLVYISQYADFTNKYGLAYVLSNSYVGAYFNDSTKIVTLIESEIAYYMEHAKGTDGDGRRVLNVTQQHPHDTQKKVTLIKYFLNHFTNSDTTNLLINTGATSSSINNNNNNNVENVTNNNNNNSNNSSNINPIYVKKWIKFDNGIAFRLSDKTIQVNYLDKSRIIVSSKDMVTFVPYRGQIITGTLNYFKNGDKKISEKIKYIYGTLSNNLYSKKPESSFQQLPQQQYQQPQHYQQQTQQPQPQPQQQQLPQQLPQPQQSPAKQHQYQPNQIQYQQSIPQPQLINQ.

A compositionally biased stretch (low complexity) spans 19–36 (IQIQQQQFKQPQQQPQQK). 2 disordered regions span residues 19 to 66 (IQIQ…SSIH) and 121 to 143 (QQQQ…NEPQ). A compositionally biased stretch (polar residues) spans 37–53 (SNSCFSDQENYPANIQP). The segment covering 54–64 (SSSTSSSSSSS) has biased composition (low complexity). Residues 163 to 416 (YRQGEFLGKG…LTQILEHDFF (254 aa)) form the Protein kinase domain. ATP contacts are provided by residues 169–177 (LGKGGFAKC) and lysine 192. The active-site Proton acceptor is the aspartate 286. Disordered regions lie at residues 463–554 (GTTS…FANL) and 601–638 (ENQQ…TVTT). Composition is skewed to low complexity over residues 473 to 492 (HHYQ…NYQQ) and 500 to 549 (INNM…NINN). Coiled-coil stretches lie at residues 497–555 (KKQI…ANLS) and 592–630 (IKQQ…INNN). The POLO box 1 domain occupies 696-780 (YISQYADFTN…IKYFLNHFTN (85 aa)). The interval 798–819 (NNNNNNNVENVTNNNNNNSNNS) is disordered. The 79-residue stretch at 826–904 (YVKKWIKFDN…IYGTLSNNLY (79 aa)) folds into the POLO box 2 domain. The segment at 908–978 (PESSFQQLPQ…SIPQPQLINQ (71 aa)) is disordered. The span at 913–978 (QQLPQQQYQQ…SIPQPQLINQ (66 aa)) shows a compositional bias: low complexity.

This sequence belongs to the protein kinase superfamily. Ser/Thr protein kinase family. CDC5/Polo subfamily.

It carries out the reaction L-seryl-[protein] + ATP = O-phospho-L-seryl-[protein] + ADP + H(+). It catalyses the reaction L-threonyl-[protein] + ATP = O-phospho-L-threonyl-[protein] + ADP + H(+). This Dictyostelium discoideum (Social amoeba) protein is Probable serine/threonine-protein kinase PLK (PLK).